Reading from the N-terminus, the 495-residue chain is 4-aminobutyrate aminotransferase (495 aa).

A pyridoxal 5'-phosphate-binding site is contributed by 160–161 (GS). Arg216 is a substrate binding site. Residue Lys350 is modified to N6-(pyridoxal phosphate)lysine. Thr374 provides a ligand contact to pyridoxal 5'-phosphate.

The protein belongs to the class-III pyridoxal-phosphate-dependent aminotransferase family. Homodimer. Pyridoxal 5'-phosphate is required as a cofactor.

It catalyses the reaction 4-aminobutanoate + 2-oxoglutarate = succinate semialdehyde + L-glutamate. This Dictyostelium discoideum (Social amoeba) protein is 4-aminobutyrate aminotransferase (gabT).